Here is an 827-residue protein sequence, read N- to C-terminus: Protein arginine N-methyltransferase 9 (827 aa).

TPR repeat units lie at residues 54–87 (QYSLFKWAEELYALNRSQDLFNCYEQALELFPID) and 88–121 (DVICNSMGEHLFRLGFRDEAAGYFYKALKLNPSS). SAM-dependent MTase PRMT-type domains follow at residues 124–453 (AKEN…YLRL) and 511–827 (NAVY…RPLQ).

This sequence belongs to the class I-like SAM-binding methyltransferase superfamily. Protein arginine N-methyltransferase family.

It localises to the cytoplasm. It catalyses the reaction L-arginyl-[protein] + 2 S-adenosyl-L-methionine = N(omega),N(omega)'-dimethyl-L-arginyl-[protein] + 2 S-adenosyl-L-homocysteine + 2 H(+). Functionally, arginine methyltransferase that can both catalyze the formation of omega-N monomethylarginine (MMA) and symmetrical dimethylarginine (sDMA). This is Protein arginine N-methyltransferase 9 (prmt9) from Xenopus laevis (African clawed frog).